Consider the following 959-residue polypeptide: Vacuolar membrane protease (959 aa).

Over 1–13 (MARLNPLSFTPGP) the chain is Cytoplasmic. Residues 14–34 (VIFFTCAVYIALFAALLTVHL) form a helical membrane-spanning segment. The Vacuolar segment spans residues 35–378 (RVPDYPSKTP…KVFVVFQLHT (344 aa)). Asn-48, Asn-102, and Asn-105 each carry an N-linked (GlcNAc...) asparagine glycan. The segment at 128–149 (GSEDDEPYHSPQSSPPGERRLD) is disordered. The Zn(2+) site is built by His-158 and Asp-170. Glu-204 serves as the catalytic Proton acceptor. 3 residues coordinate Zn(2+): Glu-205, Glu-230, and His-303. Residues 379 to 399 (MFALCVTLLVVAPLFLIGLTF) form a helical membrane-spanning segment. At 400-432 (GLSKADKNYLFARKAYMYSSDDDHPVHLYGWRG) the chain is on the cytoplasmic side. Residues 433–453 (FFRFPIVFSIATAVVVGLAYL) traverse the membrane as a helical segment. Topologically, residues 454-463 (MVRLNPLILY) are vacuolar. Residues 464 to 484 (SSPYAVWSMMLSAWFSVAWFF) form a helical membrane-spanning segment. The Cytoplasmic portion of the chain corresponds to 485–498 (SRGASAMRPSALQR). A helical transmembrane segment spans residues 499–519 (MYALIWLFAGSFALLAFVTVL). Residues 520–524 (SNNYQ) are Vacuolar-facing. Residues 525–545 (VAGGYFALFYFAGIFLALVLS) form a helical membrane-spanning segment. Residues 546–645 (YLELFFAPTK…YPGEQDWSGK (100 aa)) are Cytoplasmic-facing. Disordered stretches follow at residues 566–594 (DEPV…DATE) and 606–635 (FARH…LKQP). Over residues 612–626 (RRDSIDDENGNRDEE) the composition is skewed to basic and acidic residues. The helical transmembrane segment at 646 to 666 (LPGWLWLLQLLLVAPIVVILV) threads the bilayer. Over 667–688 (GQIALLLTSALHQTPADGNSSL) the chain is Vacuolar. Residue Asn-685 is glycosylated (N-linked (GlcNAc...) asparagine). A helical transmembrane segment spans residues 689-709 (FVYLAFALLTTLLLAPIGPFI). The Cytoplasmic portion of the chain corresponds to 710–716 (HRFTWHV). Residues 717–737 (PTFVFLVCVATVIYNLVAFPF) form a helical membrane-spanning segment. At 738–959 (SREHRLKVYF…LVEGFKYFQV (222 aa)) the chain is on the vacuolar side. Asn-785, Asn-818, Asn-834, Asn-864, and Asn-899 each carry an N-linked (GlcNAc...) asparagine glycan.

The protein belongs to the peptidase M28 family. The cofactor is Zn(2+).

The protein localises to the vacuole membrane. Its function is as follows. May be involved in vacuolar sorting and osmoregulation. In Phaeosphaeria nodorum (strain SN15 / ATCC MYA-4574 / FGSC 10173) (Glume blotch fungus), this protein is Vacuolar membrane protease.